The chain runs to 152 residues: Deoxyuridine 5'-triphosphate nucleotidohydrolase (152 aa).

Residues 71–73 (RSG), Asn84, 88–90 (LID), and Met98 each bind substrate.

This sequence belongs to the dUTPase family. Mg(2+) is required as a cofactor.

The catalysed reaction is dUTP + H2O = dUMP + diphosphate + H(+). The protein operates within pyrimidine metabolism; dUMP biosynthesis; dUMP from dCTP (dUTP route): step 2/2. In terms of biological role, this enzyme is involved in nucleotide metabolism: it produces dUMP, the immediate precursor of thymidine nucleotides and it decreases the intracellular concentration of dUTP so that uracil cannot be incorporated into DNA. The chain is Deoxyuridine 5'-triphosphate nucleotidohydrolase from Coxiella burnetii (strain RSA 331 / Henzerling II).